The chain runs to 533 residues: (E)-beta-farnesene synthase (533 aa).

Residues Asp286 and Asp290 each coordinate Mg(2+). 4 residues coordinate substrate: Asp286, Asp290, Arg427, and Asn430. The DDXXD motif signature appears at 286–290 (DDMMD). Mg(2+) is bound by residues Asn430 and Glu438.

The protein belongs to the terpene synthase family. Monomer. Mg(2+) is required as a cofactor. The cofactor is Mn(2+).

It is found in the cytoplasm. It catalyses the reaction (2E,6E)-farnesyl diphosphate = (E)-beta-farnesene + diphosphate. It carries out the reaction (2E,6E)-farnesyl diphosphate = alpha-copaene + diphosphate. The catalysed reaction is (2E,6E)-farnesyl diphosphate = (1S,5S,6R)-alpha-bergamotene + diphosphate. The enzyme catalyses (2E,6E)-farnesyl diphosphate = (-)-(E)-beta-caryophyllene + diphosphate. It catalyses the reaction (2E,6E)-farnesyl diphosphate = delta-cadinene + diphosphate. It carries out the reaction (2E,6E)-farnesyl diphosphate = (+)-germacrene D + diphosphate. The catalysed reaction is (2E,6E)-farnesyl diphosphate = alpha-zingiberene + diphosphate. The enzyme catalyses (2E,6E)-farnesyl diphosphate = alpha-muurolene + diphosphate. It catalyses the reaction (2E,6E)-farnesyl diphosphate = (S)-beta-bisabolene + diphosphate. It carries out the reaction (2E,6E)-farnesyl diphosphate = beta-sesquiphellandrene + diphosphate. The catalysed reaction is (2E,6E)-farnesyl diphosphate = sesquisabinene A + diphosphate. It functions in the pathway secondary metabolite biosynthesis; terpenoid biosynthesis. Functionally, sesquiterpene cyclase catalyzing mainly the production of beta-farnesene and alpha-bergamotene in equal amounts from farnesyl diphosphate. Also mediates the biosynthesis of minor sesquiterpene hydrocarbons including alpha-muurolene, beta-bisabolene, zingiberene, sesquiphellandrene, sesquisabinene A, germacrene D, delta-cadinene, alpha-copaene and (E)-beta-caryophyllene. Involved in indirect defense by producing volatile signals attracting natural enemies of herbivores. This chain is (E)-beta-farnesene synthase, found in Zea mays (Maize).